We begin with the raw amino-acid sequence, 446 residues long: Tubulin beta-3 chain (446 aa).

Positions 11, 69, 138, 142, 143, 144, 204, and 226 each coordinate GTP. E69 contributes to the Mg(2+) binding site. The segment at 421 to 446 (EYQQYQDATAEEEDYEEEEEDEEVAA) is disordered. The segment covering 429–446 (TAEEEDYEEEEEDEEVAA) has biased composition (acidic residues).

The protein belongs to the tubulin family. As to quaternary structure, dimer of alpha and beta chains. A typical microtubule is a hollow water-filled tube with an outer diameter of 25 nm and an inner diameter of 15 nM. Alpha-beta heterodimers associate head-to-tail to form protofilaments running lengthwise along the microtubule wall with the beta-tubulin subunit facing the microtubule plus end conferring a structural polarity. Microtubules usually have 13 protofilaments but different protofilament numbers can be found in some organisms and specialized cells. Mg(2+) serves as cofactor. Expressed in roots, second node, leaf sheaths, and suspension cultured cells.

It localises to the cytoplasm. The protein resides in the cytoskeleton. Functionally, tubulin is the major constituent of microtubules, a cylinder consisting of laterally associated linear protofilaments composed of alpha- and beta-tubulin heterodimers. Microtubules grow by the addition of GTP-tubulin dimers to the microtubule end, where a stabilizing cap forms. Below the cap, tubulin dimers are in GDP-bound state, owing to GTPase activity of alpha-tubulin. This Oryza sativa subsp. japonica (Rice) protein is Tubulin beta-3 chain (TUBB3).